The chain runs to 149 residues: Tetracenomycin polyketide synthase protein TcmJ (149 aa).

The Cupin type-2 domain maps to 51–117 (HIELAPGESV…NRGNVPARVV (67 aa)). The segment at 127-149 (PELGHVDTEPVPNPAAAPPKVGG) is disordered.

As to quaternary structure, the tetracenomycin polyketide synthase (TCM PKS) is composed of a ketosynthase complex (TcmKL), an acyl carrier protein (TcmM), a cyclase (TcmN) and a probable second cyclase (TcmJ).

The enzyme catalyses 10 malonyl-CoA + 8 H(+) = tetracenomycin F2 + 10 CO2 + 10 CoA + 2 H2O. Its pathway is antibiotic biosynthesis; tetracenomycin C biosynthesis. In terms of biological role, involved in the biosynthesis of tetracenomycin C (TCM C). Part of a type II polyketide synthase (PKS) that catalyzes the synthesis of tetracenomycin F2 (TCM F2), a precursor of TCM C, from malonyl-CoA. TcmJ, while not absolutely required, greatly increases the tetracenomycin F2 production. It probably acts as a cyclase. This Streptomyces glaucescens protein is Tetracenomycin polyketide synthase protein TcmJ.